Here is a 568-residue protein sequence, read N- to C-terminus: Sulfite reductase [NADPH] hemoprotein beta-component (568 aa).

The [4Fe-4S] cluster site is built by Cys426, Cys432, Cys471, and Cys475. Cys475 provides a ligand contact to siroheme.

This sequence belongs to the nitrite and sulfite reductase 4Fe-4S domain family. Alpha(8)-beta(8). The alpha component is a flavoprotein, the beta component is a hemoprotein. The cofactor is siroheme. It depends on [4Fe-4S] cluster as a cofactor.

It catalyses the reaction hydrogen sulfide + 3 NADP(+) + 3 H2O = sulfite + 3 NADPH + 4 H(+). Its pathway is sulfur metabolism; hydrogen sulfide biosynthesis; hydrogen sulfide from sulfite (NADPH route): step 1/1. Its function is as follows. Component of the sulfite reductase complex that catalyzes the 6-electron reduction of sulfite to sulfide. This is one of several activities required for the biosynthesis of L-cysteine from sulfate. The protein is Sulfite reductase [NADPH] hemoprotein beta-component of Xylella fastidiosa (strain M12).